The sequence spans 403 residues: Phosphoglycerate kinase (403 aa).

Substrate contacts are provided by residues 21-23 (DFN), Arg36, 59-62 (HLGR), Arg119, and Arg154. ATP is bound by residues Lys207, Gly299, Glu330, and 357–360 (GGDA).

It belongs to the phosphoglycerate kinase family. In terms of assembly, monomer.

It is found in the cytoplasm. It carries out the reaction (2R)-3-phosphoglycerate + ATP = (2R)-3-phospho-glyceroyl phosphate + ADP. It functions in the pathway carbohydrate degradation; glycolysis; pyruvate from D-glyceraldehyde 3-phosphate: step 2/5. The sequence is that of Phosphoglycerate kinase (pgk) from Chlamydia muridarum (strain MoPn / Nigg).